We begin with the raw amino-acid sequence, 336 residues long: MKDRYILAVESSCDETSVAILKNDKELLANIIASQVESHKRFGGVVPEVASRHHVEVVTTCFEDALQEAGIVASDLDAVAVTYGPGLVGALLVGMAAAKAFAWANKLPLIPVNHMAGHLMAARDVKELQYPLLALLVSGGHTELVYVSEPGDYKIVGETRDDAVGEAYDKVGRVMGLTYPAGREIDQLAHKGQDTYHFPRAMIKEDHLEFSFSGLKSAFINLHHNAEQKGEALVLEDLCASFQAAVLDILLAKTQKALLKHPVKTLVVAGGVAANQGLRERLATDISPDIDVVIPPLRLCGDNAGMIALAAAIEFEKENFASLKLNAKPSLAFESL.

Fe cation is bound by residues His114 and His118. Residues 136-140, Asp169, Gly182, Asp186, and Asn275 contribute to the substrate site; that span reads LVSGG. Asp302 is a binding site for Fe cation.

Belongs to the KAE1 / TsaD family. The cofactor is Fe(2+).

The protein localises to the cytoplasm. It carries out the reaction L-threonylcarbamoyladenylate + adenosine(37) in tRNA = N(6)-L-threonylcarbamoyladenosine(37) in tRNA + AMP + H(+). Functionally, required for the formation of a threonylcarbamoyl group on adenosine at position 37 (t(6)A37) in tRNAs that read codons beginning with adenine. Is involved in the transfer of the threonylcarbamoyl moiety of threonylcarbamoyl-AMP (TC-AMP) to the N6 group of A37, together with TsaE and TsaB. TsaD likely plays a direct catalytic role in this reaction. The sequence is that of tRNA N6-adenosine threonylcarbamoyltransferase from Streptococcus agalactiae serotype Ia (strain ATCC 27591 / A909 / CDC SS700).